The following is a 188-amino-acid chain: Murein DD-endopeptidase MepS/Murein LD-carboxypeptidase (188 aa).

Positions 1-26 (MVKSQPILRYILRGIPAIAVAVLLSA) are cleaved as a signal peptide. A lipid anchor (N-palmitoyl cysteine) is attached at cysteine 27. The S-diacylglycerol cysteine moiety is linked to residue cysteine 27. Positions 64–185 (VDVKSRIMDQ…KRYNEARRVL (122 aa)) constitute a NlpC/P60 domain. The active-site Nucleophile is cysteine 94. Histidine 145 acts as the Proton acceptor in catalysis. The active site involves histidine 157.

This sequence belongs to the peptidase C40 family. As to quaternary structure, monomer.

The protein resides in the cell outer membrane. The enzyme catalyses N-acetyl-D-glucosaminyl-N-acetylmuramoyl-L-alanyl-meso-2,6-diaminoheptanedioyl-D-alanine + H2O = N-acetyl-D-glucosaminyl-N-acetylmuramoyl-L-alanyl-meso-2,6-diaminoheptanedioate + D-alanine. Its pathway is cell wall biogenesis; cell wall polysaccharide biosynthesis. Functionally, a murein DD-endopeptidase with specificity for D-Ala-meso-diaminopimelic acid (mDAP) cross-links. Its role is probably to cleave D-Ala-mDAP cross-links to allow insertion of new glycans and thus cell wall expansion. Functionally redundant with MepM and MepH. Also has weak LD-carboxypeptidase activity on L-mDAP-D-Ala peptide bonds. This Escherichia coli O157:H7 protein is Murein DD-endopeptidase MepS/Murein LD-carboxypeptidase (mepS).